A 99-amino-acid chain; its full sequence is uncharacterized protein (99 aa).

This is an uncharacterized protein from Micromonospora olivasterospora.